A 242-amino-acid polypeptide reads, in one-letter code: Thaumatin-like protein 2 (242 aa).

An N-terminal signal peptide occupies residues 1–23 (MMKTLGAVLSLSLTLLSFGGAHA). Cystine bridges form between cysteine 32–cysteine 241, cysteine 77–cysteine 87, cysteine 92–cysteine 99, cysteine 147–cysteine 230, cysteine 152–cysteine 213, cysteine 160–cysteine 176, cysteine 180–cysteine 189, and cysteine 190–cysteine 200.

The protein belongs to the thaumatin family. Preferentially expressed in the abscission zone of fruit. Also expressed in leaf abscission zone.

It localises to the secreted. May be involved in protecting plant tissues from pathogen infection. The sequence is that of Thaumatin-like protein 2 from Prunus persica (Peach).